Consider the following 124-residue polypeptide: Putative calmodulin-3 (124 aa).

EF-hand domains follow at residues 1 to 18 (GCIT…LGQN), 19 to 54 (PTEA…KIKD), 56 to 91 (DFEE…LGEK), and 92 to 124 (LTDE…MMAK). Ca(2+) contacts are provided by cysteine 2, glutamate 7, aspartate 32, aspartate 34, asparagine 36, threonine 38, glutamate 43, aspartate 69, aspartate 71, asparagine 73, and glutamate 80. Residue lysine 91 is modified to N6,N6,N6-trimethyllysine. Aspartate 105, aspartate 107, aspartate 109, glutamine 111, and glutamate 116 together coordinate Ca(2+).

The protein belongs to the calmodulin family. Not detected in the organs tested.

Its function is as follows. Calmodulin mediates the control of a large number of enzymes, ion channels and other proteins by Ca(2+). Among the enzymes to be stimulated by the calmodulin-Ca(2+) complex are a number of protein kinases and phosphatases. The polypeptide is Putative calmodulin-3 (PCM3) (Solanum tuberosum (Potato)).